A 209-amino-acid polypeptide reads, in one-letter code: Uracil phosphoribosyltransferase (209 aa).

Residues Arg-79, Arg-104, and 131 to 139 (DPMLATGGS) each bind 5-phospho-alpha-D-ribose 1-diphosphate. Uracil is bound by residues Ile-194 and 199 to 201 (GDA). A 5-phospho-alpha-D-ribose 1-diphosphate-binding site is contributed by Asp-200.

The protein belongs to the UPRTase family. It depends on Mg(2+) as a cofactor.

The enzyme catalyses UMP + diphosphate = 5-phospho-alpha-D-ribose 1-diphosphate + uracil. It participates in pyrimidine metabolism; UMP biosynthesis via salvage pathway; UMP from uracil: step 1/1. Its activity is regulated as follows. Allosterically activated by GTP. Functionally, catalyzes the conversion of uracil and 5-phospho-alpha-D-ribose 1-diphosphate (PRPP) to UMP and diphosphate. This Streptococcus pneumoniae serotype 4 (strain ATCC BAA-334 / TIGR4) protein is Uracil phosphoribosyltransferase.